The following is a 412-amino-acid chain: Protein MITOFERRINLIKE 1, chloroplastic (412 aa).

A chloroplast-targeting transit peptide spans 1–92; sequence MEARLSETLG…PGPEFLKWIK (92 aa). The disordered stretch occupies residues 43–83; it reads VRNPKLKTKSSQKPPKFSANFRRSDPPFASTSISDPTHEKP. Solcar repeat units follow at residues 112 to 198, 206 to 288, and 298 to 392; these read ERAI…GKSL, PTVL…LKAA, and LEPL…ARLT. Transmembrane regions (helical) follow at residues 115–135, 167–187, 208–228, 262–282, 303–323, and 365–385; these read IIGA…LLPL, ILGF…SSAV, VLIP…IMVP, AGYS…YSSF, SVCC…PLDV, and TRGM…GYFA.

This sequence belongs to the mitochondrial carrier (TC 2.A.29) family. As to expression, expressed in leaves, developing flowers and siliques.

It is found in the plastid. The protein localises to the chloroplast inner membrane. In terms of biological role, probably involved in iron transport into chloroplasts. This is Protein MITOFERRINLIKE 1, chloroplastic (MFL1) from Arabidopsis thaliana (Mouse-ear cress).